The following is a 938-amino-acid chain: Leucine--tRNA ligase 1 (938 aa).

A 'HIGH' region motif is present at residues 40 to 50 (PYTNSPLHIGH). The short motif at 620–624 (KMSKS) is the 'KMSKS' region element. Lysine 623 lines the ATP pocket.

The protein belongs to the class-I aminoacyl-tRNA synthetase family.

It is found in the cytoplasm. The catalysed reaction is tRNA(Leu) + L-leucine + ATP = L-leucyl-tRNA(Leu) + AMP + diphosphate. This Metallosphaera sedula (strain ATCC 51363 / DSM 5348 / JCM 9185 / NBRC 15509 / TH2) protein is Leucine--tRNA ligase 1.